A 337-amino-acid polypeptide reads, in one-letter code: Viral cathepsin (337 aa).

Residues 1–16 (MNKLLILFLLLNAALT) form the signal peptide. Positions 17 to 126 (RQDNHASANN…VVDGPAQRQR (110 aa)) are cleaved as a propeptide — activation peptide. Intrachain disulfides connect C147–C188, C181–C221, and C276–C324. C150 is a catalytic residue. Residues H283 and N303 contribute to the active site.

This sequence belongs to the peptidase C1 family. Synthesized as an inactive proenzyme and activated by proteolytic removal of the inhibitory propeptide.

It catalyses the reaction Endopeptidase of broad specificity, hydrolyzing substrates of both cathepsin L and cathepsin B.. In terms of biological role, cysteine protease that plays an essential role in host liquefaction to facilitate horizontal transmission of the virus. May participate in the degradation of foreign protein expressed by the baculovirus system. The polypeptide is Viral cathepsin (VCATH) (Lepidoptera (butterflies and moths)).